Consider the following 761-residue polypeptide: Elongation factor G, mitochondrial (761 aa).

Residues methionine 1 to arginine 42 constitute a mitochondrion transit peptide. Positions asparagine 68–serine 349 constitute a tr-type G domain. GTP contacts are provided by residues alanine 77 to threonine 84, aspartate 148 to histidine 152, and asparagine 202 to aspartate 205.

This sequence belongs to the TRAFAC class translation factor GTPase superfamily. Classic translation factor GTPase family. EF-G/EF-2 subfamily. The precursor is processed in two steps involving mitochondrial intermediate peptidase (MIP) and mitochondrial processing peptidase (MPP).

The protein resides in the mitochondrion. The protein operates within protein biosynthesis; polypeptide chain elongation. Functionally, mitochondrial GTPase that catalyzes the GTP-dependent ribosomal translocation step during translation elongation. During this step, the ribosome changes from the pre-translocational (PRE) to the post-translocational (POST) state as the newly formed A-site-bound peptidyl-tRNA and P-site-bound deacylated tRNA move to the P and E sites, respectively. Catalyzes the coordinated movement of the two tRNA molecules, the mRNA and conformational changes in the ribosome. This Saccharomyces cerevisiae (strain ATCC 204508 / S288c) (Baker's yeast) protein is Elongation factor G, mitochondrial.